The following is a 97-amino-acid chain: Putative septation protein SpoVG (97 aa).

Belongs to the SpoVG family.

In terms of biological role, could be involved in septation. This is Putative septation protein SpoVG from Borrelia garinii subsp. bavariensis (strain ATCC BAA-2496 / DSM 23469 / PBi) (Borreliella bavariensis).